The following is a 363-amino-acid chain: Cinnamyl alcohol dehydrogenase 2 (363 aa).

Residue Cys47 participates in Zn(2+) binding. An NADP(+)-binding site is contributed by Thr49. Zn(2+)-binding residues include His69, Glu70, Cys100, Cys103, Cys106, Cys114, and Cys163. Residues Thr167, 188–193 (GLGGVG), 211–216 (SSSARK), Thr251, Gly275, and 298–300 (SFI) contribute to the NADP(+) site.

Belongs to the zinc-containing alcohol dehydrogenase family. Homodimer. It depends on Zn(2+) as a cofactor. In terms of tissue distribution, expressed in roots behind the root tips in the pericycle region and layer of cortical cells adjacent to the exodermis. Expressed in vascular bundles and lateral veins of leaf sheaths and blades. Expressed in the vicinity of vascular bundles in the first internode below the inflorescence. Highly expressed in the culm.

The enzyme catalyses (E)-cinnamyl alcohol + NADP(+) = (E)-cinnamaldehyde + NADPH + H(+). The catalysed reaction is (E)-coniferol + NADP(+) = (E)-coniferaldehyde + NADPH + H(+). It carries out the reaction (E)-sinapyl alcohol + NADP(+) = (E)-sinapaldehyde + NADPH + H(+). It catalyses the reaction (E)-4-coumaroyl alcohol + NADP(+) = (E)-4-coumaraldehyde + NADPH + H(+). The enzyme catalyses (E)-caffeyl alcohol + NADP(+) = (E)-caffeyl aldehyde + NADPH + H(+). Its pathway is aromatic compound metabolism; phenylpropanoid biosynthesis. In terms of biological role, involved in lignin biosynthesis. Catalyzes the final step specific for the production of lignin monomers. Catalyzes the NADPH-dependent reduction of coniferaldehyde and sinapaldehyde to their respective alcohols. Plays the major role in monolignol biosynthesis. Functions cooperatively with COMT in the culm internodes for the biosynthesis of monolignols, the lignin precursors. May be involved in lignin biosynthesis in leaves and roots. In Oryza sativa subsp. japonica (Rice), this protein is Cinnamyl alcohol dehydrogenase 2.